The primary structure comprises 414 residues: Isocitrate dehydrogenase [NADP] cytoplasmic (414 aa).

S2 carries the post-translational modification N-acetylserine. Y42 carries the phosphotyrosine modification. T75 to T77 is a binding site for NADP(+). T77 is a substrate binding site. The residue at position 81 (K81) is an N6-acetyllysine. R82 provides a ligand contact to NADP(+). Residues S94 to R100 and R109 each bind substrate. K126 carries the post-translational modification N6-succinyllysine. Residues R132 and K212 each coordinate substrate. An N6-acetyllysine mark is found at K224, K233, and K243. D252 is a binding site for Mn(2+). K260 lines the NADP(+) pocket. The Mn(2+) site is built by D275 and D279. Residue G310–H315 participates in NADP(+) binding. K321 bears the N6-acetyllysine mark. NADP(+) is bound at residue N328. At S389 the chain carries Phosphoserine. K400 is subject to N6-succinyllysine.

The protein belongs to the isocitrate and isopropylmalate dehydrogenases family. Homodimer. Requires Mg(2+) as cofactor. Mn(2+) is required as a cofactor. Post-translationally, acetylation at Lys-374 dramatically reduces catalytic activity.

It localises to the cytoplasm. The protein resides in the cytosol. It carries out the reaction D-threo-isocitrate + NADP(+) = 2-oxoglutarate + CO2 + NADPH. Functionally, catalyzes the NADP(+)-dependent oxidative decarboxylation of isocitrate (D-threo-isocitrate) to 2-ketoglutarate (2-oxoglutarate), which is required by other enzymes such as the phytanoyl-CoA dioxygenase. Plays a critical role in the generation of NADPH, an important cofactor in many biosynthesis pathways. May act as a corneal epithelial crystallin and may be involved in maintaining corneal epithelial transparency. The protein is Isocitrate dehydrogenase [NADP] cytoplasmic (IDH1) of Microtus ochrogaster (Prairie vole).